The following is a 182-amino-acid chain: Inner membrane assembly complex subunit 17 (182 aa).

A mitochondrion-targeting transit peptide spans 1–45; sequence MLKRRSNALITLSRTKLFPITTVAYYHRRLLNQQRRAVSTSPKKE. At 46–107 the chain is on the mitochondrial matrix side; it reads IKSLEDLANL…EIPVKRFIRP (62 aa). Residues 108–127 form a helical membrane-spanning segment; it reads LWMFILMGSSVYLLLHFSWW. Residues 128–158 adopt a coiled-coil conformation; it reads KLEHEERESQLKKEVEILEHQLNELIVQDKT. At 128–182 the chain is on the mitochondrial intermembrane side; the sequence is KLEHEERESQLKKEVEILEHQLNELIVQDKTHNTSRGKGSNESTHMKPWYRRWFW.

It belongs to the INA17 family. In terms of assembly, component of the inner membrane assembly (INA) complex, composed of INA17 and INA22. Interacts with a subset of F(1)F(0)-ATP synthase subunits of the F(1)-domain and the peripheral stalk.

It is found in the mitochondrion inner membrane. Its function is as follows. Component of the INA complex (INAC) that promotes the biogenesis of mitochondrial F(1)F(0)-ATP synthase. INAC facilitates the assembly of the peripheral stalk and promotes the assembly of the catalytic F(1)-domain with the membrane-embedded F(0)-domain. The polypeptide is Inner membrane assembly complex subunit 17 (Saccharomyces cerevisiae (strain RM11-1a) (Baker's yeast)).